Here is a 621-residue protein sequence, read N- to C-terminus: ATP-dependent lipid A-core flippase (621 aa).

The next 5 helical transmembrane spans lie at 32 to 52 (IVAA…LAAF), 91 to 111 (VWGT…LVVI), 192 to 212 (IVLL…FPLL), 286 to 306 (SPFS…IALW), and 312 to 332 (YTTI…YAPI). The 312-residue stretch at 33–344 (VAALIAIFGV…LANISIPMQT (312 aa)) folds into the ABC transmembrane type-1 domain. Residues 378–611 (FRNVDVEYRS…NGYYTMLRNI (234 aa)) enclose the ABC transporter domain. 410 to 417 (GRSGSGKS) contributes to the ATP binding site.

The protein belongs to the ABC transporter superfamily. Lipid exporter (TC 3.A.1.106) family. Homodimer.

Its subcellular location is the cell inner membrane. The enzyme catalyses ATP + H2O + lipid A-core oligosaccharideSide 1 = ADP + phosphate + lipid A-core oligosaccharideSide 2.. In terms of biological role, involved in lipopolysaccharide (LPS) biosynthesis. Translocates lipid A-core from the inner to the outer leaflet of the inner membrane. Transmembrane domains (TMD) form a pore in the inner membrane and the ATP-binding domain (NBD) is responsible for energy generation. This Neisseria meningitidis serogroup A / serotype 4A (strain DSM 15465 / Z2491) protein is ATP-dependent lipid A-core flippase.